The primary structure comprises 37 residues: Large ribosomal subunit protein bL36c (37 aa).

Belongs to the bacterial ribosomal protein bL36 family.

It is found in the plastid. Its subcellular location is the chloroplast. The protein is Large ribosomal subunit protein bL36c (rpl36) of Chlamydomonas reinhardtii (Chlamydomonas smithii).